A 205-amino-acid polypeptide reads, in one-letter code: Probable thymidylate kinase (205 aa).

7 to 14 (GIDGAGKS) lines the ATP pocket.

This sequence belongs to the thymidylate kinase family.

It carries out the reaction dTMP + ATP = dTDP + ADP. The sequence is that of Probable thymidylate kinase from Thermococcus onnurineus (strain NA1).